Consider the following 709-residue polypeptide: ATP-dependent zinc metalloprotease FtsH (709 aa).

Residues 1-25 (MKKNKGLNEATTSEKPQFPKRTAWK) lie on the Cytoplasmic side of the membrane. A helical membrane pass occupies residues 26–46 (IFWWVVILAIIIGILVYILMP). The Extracellular segment spans residues 47–171 (RATTAVIEKW…FVAPDTRARD (125 aa)). A helical transmembrane segment spans residues 172–192 (VLNIFFGLLPIIIFVIFFLLF). Topologically, residues 193-709 (WRSARGISGG…DTEKDSETNS (517 aa)) are cytoplasmic. 268–275 (GPPGTGKT) lines the ATP pocket. Position 490 (His490) interacts with Zn(2+). Glu491 is an active-site residue. Residues His494 and Asp569 each contribute to the Zn(2+) site. The interval 673-709 (ILAQKQEQQAKQKAEAKEAKLNKKTEKDTEKDSETNS) is disordered. The segment covering 680–709 (QQAKQKAEAKEAKLNKKTEKDTEKDSETNS) has biased composition (basic and acidic residues).

In the central section; belongs to the AAA ATPase family. The protein in the C-terminal section; belongs to the peptidase M41 family. Homohexamer. Requires Zn(2+) as cofactor.

Its subcellular location is the cell membrane. Functionally, acts as a processive, ATP-dependent zinc metallopeptidase for both cytoplasmic and membrane proteins. Plays a role in the quality control of integral membrane proteins. This Mycoplasma pneumoniae (strain ATCC 29342 / M129 / Subtype 1) (Mycoplasmoides pneumoniae) protein is ATP-dependent zinc metalloprotease FtsH.